A 378-amino-acid chain; its full sequence is Cysteine synthase (378 aa).

The interval 10 to 31 is disordered; it reads NSEGDSNQQQNNNNNSNNNLKE. Residues 15–28 show a composition bias toward low complexity; sequence SNQQQNNNNNSNNN. K79 carries the post-translational modification N6-(pyridoxal phosphate)lysine. Residues 215–219 and S319 each bind pyridoxal 5'-phosphate; that span reads GTGGT.

This sequence belongs to the cysteine synthase/cystathionine beta-synthase family. The cofactor is pyridoxal 5'-phosphate.

It catalyses the reaction O-acetyl-L-serine + hydrogen sulfide = L-cysteine + acetate. Its pathway is amino-acid biosynthesis; L-cysteine biosynthesis; L-cysteine from L-serine: step 2/2. In Dictyostelium discoideum (Social amoeba), this protein is Cysteine synthase (cysK).